A 626-amino-acid chain; its full sequence is FAD-binding monooxygenase moxY (626 aa).

Over residues 1–23 (MAPFLSAHGESASSSSSSSPTPS) the composition is skewed to low complexity. The interval 1–47 (MAPFLSAHGESASSSSSSSPTPSRHTRNQHVDYSTPGSTGYNIPQNT) is disordered. Over residues 31–47 (VDYSTPGSTGYNIPQNT) the composition is skewed to polar residues. Residues 96–99 (TWLE), 108–109 (DI), and Y114 each bind FAD. 106 to 108 (GCD) contributes to the NADP(+) binding site. Residues 243-249 (SGASSIQ) and 266-267 (RT) contribute to the NADP(+) site.

Belongs to the FAD-binding monooxygenase family. It depends on FAD as a cofactor.

It participates in mycotoxin biosynthesis. FAD-binding monooxygenase; part of the fragmented gene cluster that mediates the biosynthesis of dothistromin (DOTH), a polyketide toxin very similar in structure to the aflatoxin precursor, versicolorin B. The first step of the pathway is the conversion of acetate to norsolorinic acid (NOR) and requires the fatty acid synthase subunits hexA and hexB, as well as the polyketide synthase pksA. PksA combines a hexanoyl starter unit and 7 malonyl-CoA extender units to synthesize the precursor NOR. The hexanoyl starter unit is provided to the acyl-carrier protein (ACP) domain by the fungal fatty acid synthase hexA/hexB. The second step is the conversion of NOR to averantin (AVN) and requires the norsolorinic acid ketoreductase nor1, which catalyzes the dehydration of norsolorinic acid to form (1'S)-averantin. The cytochrome P450 monooxygenase avnA then catalyzes the hydroxylation of AVN to 5'hydroxyaverantin (HAVN). The next step is performed by adhA that transforms HAVN to averufin (AVF). Averufin might then be converted to hydroxyversicolorone by cypX and avfA. Hydroxyversicolorone is further converted versiconal hemiacetal acetate (VHA) by moxY. VHA is then the substrate for the versiconal hemiacetal acetate esterase est1 to yield versiconal (VAL). Versicolorin B synthase vbsA then converts VAL to versicolorin B (VERB) by closing the bisfuran ring. Then, the activity of the versicolorin B desaturase verB leads to versicolorin A (VERA). DotB, a predicted chloroperoxidase, may perform epoxidation of the A-ring of VERA. Alternatively, a cytochrome P450, such as cypX or avnA could catalyze this step. It is also possible that another, uncharacterized, cytochrome P450 enzyme is responsible for this step. Opening of the epoxide could potentially be achieved by the epoxide hydrolase epoA. However, epoA seems not to be required for DOTH biosynthesis, but other epoxide hydrolases may have the ability to complement this hydrolysis. Alternatively, opening of the epoxide ring could be achieved non-enzymatically. The next step is the deoxygenation of ring A to yield the 5,8-dihydroxyanthraquinone which is most likely catalyzed by the NADPH dehydrogenase encoded by ver1. The last stages of DOTH biosynthesis are proposed to involve hydroxylation of the bisfuran. OrdB and norB might have oxidative roles here. An alternative possibility is that cytochrome P450 monoogenases such as avnA and cypX might perform these steps in addition to previously proposed steps. This is FAD-binding monooxygenase moxY from Dothistroma septosporum (Red band needle blight fungus).